We begin with the raw amino-acid sequence, 307 residues long: Mediator of RNA polymerase II transcription subunit 18 (307 aa).

A compositionally biased stretch (polar residues) spans 117–126 (TNFNSTNEDQ). The disordered stretch occupies residues 117-162 (TNFNSTNEDQNNSKHTEDTVNESRNSDDIIDVDMDASPAPSNESCS).

Belongs to the Mediator complex subunit 18 family. As to quaternary structure, component of the Mediator complex, which is composed of at least 21 subunits that form three structurally distinct submodules. The Mediator head module contains MED6, MED8, MED11, SRB4/MED17, SRB5/MED18, ROX3/MED19, SRB2/MED20 and SRB6/MED22, the middle module contains MED1, MED4, NUT1/MED5, MED7, CSE2/MED9, NUT2/MED10, SRB7/MED21 and SOH1/MED31, and the tail module contains MED2, PGD1/MED3, RGR1/MED14, GAL11/MED15 and SIN4/MED16. The head and the middle modules interact directly with RNA polymerase II, whereas the elongated tail module interacts with gene-specific regulatory proteins. SRB5/MED18 interacts directly with MED8 and SRB2/MED20.

It localises to the nucleus. Component of the Mediator complex, a coactivator involved in the regulated transcription of nearly all RNA polymerase II-dependent genes. Mediator functions as a bridge to convey information from gene-specific regulatory proteins to the basal RNA polymerase II transcription machinery. The Mediator complex, having a compact conformation in its free form, is recruited to promoters by direct interactions with regulatory proteins and serves for the assembly of a functional preinitiation complex with RNA polymerase II and the general transcription factors. The Mediator complex unfolds to an extended conformation and partially surrounds RNA polymerase II, specifically interacting with the unphosphorylated form of the C-terminal domain (CTD) of RNA polymerase II. The Mediator complex dissociates from the RNA polymerase II holoenzyme and stays at the promoter when transcriptional elongation begins. This Saccharomyces cerevisiae (strain ATCC 204508 / S288c) (Baker's yeast) protein is Mediator of RNA polymerase II transcription subunit 18 (SRB5).